Consider the following 170-residue polypeptide: MELKKFIRDIPDFPKKGIIFKDITPLLKDKEAFNLAIEKMKDYYKDFDIDYIVGIEARGFIIGTPLALALNKGFIPIRKPGKLPAERISTSYELEYGTNEIEIHRDAIQPGDKILLVDDLLATGGTVKAAIELINKLQGEIVSLGFLIELVDLKGREKLEGYDVFTLLQE.

It belongs to the purine/pyrimidine phosphoribosyltransferase family. In terms of assembly, homodimer.

The protein localises to the cytoplasm. The catalysed reaction is AMP + diphosphate = 5-phospho-alpha-D-ribose 1-diphosphate + adenine. Its pathway is purine metabolism; AMP biosynthesis via salvage pathway; AMP from adenine: step 1/1. Functionally, catalyzes a salvage reaction resulting in the formation of AMP, that is energically less costly than de novo synthesis. The polypeptide is Adenine phosphoribosyltransferase (Halothermothrix orenii (strain H 168 / OCM 544 / DSM 9562)).